The chain runs to 345 residues: Mariner Mos1 transposase (345 aa).

Residues 1-112 (MSSFVPNKEQ…VSNRLREMGK (112 aa)) form a DNA-binding region. DNA-binding regions (H-T-H motif) lie at residues 24 to 55 (TAAESHRMLVEAFGEQVPTVKKCERWFQRFKS) and 89 to 110 (QKQLAEQLEVSQQAVSNRLREM). Residues 113 to 125 (IQKVGRWVPHELN) are linker. A catalytic region spans residues 126-345 (ERQMERRKNT…CVASDGKYLE (220 aa)). Asp-156, Asp-249, and Asp-284 together coordinate Mg(2+).

As to quaternary structure, homodimer. The complex has a trans arrangement, with each transposon end recognized by the DNA binding region of one transposase monomer and by the active site of the other monomer. It depends on Mg(2+) as a cofactor. Mn(2+) serves as cofactor.

It is found in the nucleus. Mediates transposition of transposon Mos1 by a 'cut and paste' mechanism. Transposases are sequence-specific nucleases and strand transferases that catalyze transposition through an ordered series of events: sequence-specific binding of transposase to the terminal inverted repeats (IR) present at each end of the transposon, pairing of the transposon IRs in a paired-end complex (PEC), cleavage of one or both DNA strands at each transposon end, capture of target DNA, and strand transfer to insert the transposon at a new site. The chain is Mariner Mos1 transposase (mariner\T) from Drosophila mauritiana (Fruit fly).